The following is a 197-amino-acid chain: MDLIDRISRQFEDSAQTKLAAVEWMAAPIAQAVEMMTASLMNNGKILACGNGGSAADAQHFAAELLNRFEMERPPLAAVALTTDTSTLTSIANDYDFVQVFSKQVRALGQPGDVLLAISTSGNSPNVIDAIQAAHEREMHVVALTGKGGGRIGEMLSPTDVHLCVPADRTARIQEVHLLTLHCLCDGIDCLLLGVEE.

The region spanning M36 to E197 is the SIS domain. N51–G53 lines the substrate pocket. Zn(2+) is bound by residues H60 and E64. Residues E64, N93–D94, S119–S121, S124, and Q174 each bind substrate. Residues Q174 and H182 each coordinate Zn(2+).

This sequence belongs to the SIS family. GmhA subfamily. Homotetramer. The cofactor is Zn(2+).

It localises to the cytoplasm. The enzyme catalyses 2 D-sedoheptulose 7-phosphate = D-glycero-alpha-D-manno-heptose 7-phosphate + D-glycero-beta-D-manno-heptose 7-phosphate. It functions in the pathway carbohydrate biosynthesis; D-glycero-D-manno-heptose 7-phosphate biosynthesis; D-glycero-alpha-D-manno-heptose 7-phosphate and D-glycero-beta-D-manno-heptose 7-phosphate from sedoheptulose 7-phosphate: step 1/1. Functionally, catalyzes the isomerization of sedoheptulose 7-phosphate in D-glycero-D-manno-heptose 7-phosphate. The sequence is that of Phosphoheptose isomerase from Azoarcus sp. (strain BH72).